Consider the following 336-residue polypeptide: Phenylalanine--tRNA ligase alpha subunit (336 aa).

E251 contributes to the Mg(2+) binding site.

It belongs to the class-II aminoacyl-tRNA synthetase family. Phe-tRNA synthetase alpha subunit type 1 subfamily. In terms of assembly, tetramer of two alpha and two beta subunits. It depends on Mg(2+) as a cofactor.

The protein resides in the cytoplasm. It carries out the reaction tRNA(Phe) + L-phenylalanine + ATP = L-phenylalanyl-tRNA(Phe) + AMP + diphosphate + H(+). In Syntrophobacter fumaroxidans (strain DSM 10017 / MPOB), this protein is Phenylalanine--tRNA ligase alpha subunit.